The following is a 136-amino-acid chain: METGLRWLLLVAVLKGVQCQSVKESEGGLFKPMDTLTLTCTVSGFSLSSYGVNWVRQAPGKGLEWIGYIGTGTYLANWAKSRSTITSNTNENTVTLKMTSLTGADTATYFCGSGANIENEFFNAIWGPGTLVTVSS.

Positions 1–19 (METGLRWLLLVAVLKGVQC) are cleaved as a signal peptide. Glutamine 20 carries the pyrrolidone carboxylic acid modification. Residues 20–127 (QSVKESEGGL…ENEFFNAIWG (108 aa)) enclose the Ig-like domain.

This Oryctolagus cuniculus (Rabbit) protein is Ig heavy chain V-A2 region P-MU-3.